The sequence spans 644 residues: 3D-(3,5/4)-trihydroxycyclohexane-1,2-dione hydrolase (644 aa).

Glu-65 provides a ligand contact to thiamine diphosphate. A thiamine pyrophosphate binding region spans residues 442–522; it reads SLPGDLQRMW…INVLLFDNSG (81 aa). Asp-493 and Asn-520 together coordinate Mg(2+).

The protein belongs to the TPP enzyme family. Mg(2+) serves as cofactor. It depends on thiamine diphosphate as a cofactor.

It carries out the reaction 3D-3,5/4-trihydroxycyclohexane-1,2-dione + H2O = 5-deoxy-D-glucuronate + H(+). Its pathway is polyol metabolism; myo-inositol degradation into acetyl-CoA; acetyl-CoA from myo-inositol: step 3/7. Functionally, involved in the cleavage of the C1-C2 bond of 3D-(3,5/4)-trihydroxycyclohexane-1,2-dione (THcHDO) to yield 5-deoxy-glucuronate (5DG). In Bacillus anthracis (strain A0248), this protein is 3D-(3,5/4)-trihydroxycyclohexane-1,2-dione hydrolase.